A 315-amino-acid chain; its full sequence is Methionyl-tRNA formyltransferase (315 aa).

113–116 (SLLP) is a binding site for (6S)-5,6,7,8-tetrahydrofolate.

It belongs to the Fmt family.

The enzyme catalyses L-methionyl-tRNA(fMet) + (6R)-10-formyltetrahydrofolate = N-formyl-L-methionyl-tRNA(fMet) + (6S)-5,6,7,8-tetrahydrofolate + H(+). Its function is as follows. Attaches a formyl group to the free amino group of methionyl-tRNA(fMet). The formyl group appears to play a dual role in the initiator identity of N-formylmethionyl-tRNA by promoting its recognition by IF2 and preventing the misappropriation of this tRNA by the elongation apparatus. The sequence is that of Methionyl-tRNA formyltransferase from Shigella dysenteriae serotype 1 (strain Sd197).